A 320-amino-acid chain; its full sequence is Fructose-1,6-bisphosphatase class 1 (320 aa).

Mg(2+) is bound by residues glutamate 105, aspartate 124, leucine 126, and aspartate 127. Substrate-binding positions include aspartate 127–serine 130, tyrosine 233, and lysine 263. Residue glutamate 269 participates in Mg(2+) binding.

The protein belongs to the FBPase class 1 family. Homotetramer. Requires Mg(2+) as cofactor.

It localises to the cytoplasm. The catalysed reaction is beta-D-fructose 1,6-bisphosphate + H2O = beta-D-fructose 6-phosphate + phosphate. Its pathway is carbohydrate biosynthesis; gluconeogenesis. The protein is Fructose-1,6-bisphosphatase class 1 of Methanocorpusculum labreanum (strain ATCC 43576 / DSM 4855 / Z).